An 85-amino-acid chain; its full sequence is Large ribosomal subunit protein bL27 (85 aa).

A disordered region spans residues 1 to 23 (MAHKKAGGSTRNGRDSESKRLGV).

This sequence belongs to the bacterial ribosomal protein bL27 family.

This chain is Large ribosomal subunit protein bL27, found in Thioalkalivibrio sulfidiphilus (strain HL-EbGR7).